The following is a 388-amino-acid chain: Succinate--CoA ligase [ADP-forming] subunit beta (388 aa).

One can recognise an ATP-grasp domain in the interval 9–244 (KQLFAEYGLP…PSQDDPREAH (236 aa)). ATP contacts are provided by residues K46, 53-55 (GRG), E99, T102, and E107. The Mg(2+) site is built by N199 and D213. Substrate contacts are provided by residues N264 and 321 to 323 (GIV).

Belongs to the succinate/malate CoA ligase beta subunit family. In terms of assembly, heterotetramer of two alpha and two beta subunits. Mg(2+) is required as a cofactor.

The catalysed reaction is succinate + ATP + CoA = succinyl-CoA + ADP + phosphate. It carries out the reaction GTP + succinate + CoA = succinyl-CoA + GDP + phosphate. Its pathway is carbohydrate metabolism; tricarboxylic acid cycle; succinate from succinyl-CoA (ligase route): step 1/1. Functionally, succinyl-CoA synthetase functions in the citric acid cycle (TCA), coupling the hydrolysis of succinyl-CoA to the synthesis of either ATP or GTP and thus represents the only step of substrate-level phosphorylation in the TCA. The beta subunit provides nucleotide specificity of the enzyme and binds the substrate succinate, while the binding sites for coenzyme A and phosphate are found in the alpha subunit. This Aeromonas hydrophila subsp. hydrophila (strain ATCC 7966 / DSM 30187 / BCRC 13018 / CCUG 14551 / JCM 1027 / KCTC 2358 / NCIMB 9240 / NCTC 8049) protein is Succinate--CoA ligase [ADP-forming] subunit beta.